Consider the following 580-residue polypeptide: Rho guanine nucleotide exchange factor 25 (580 aa).

The span at 48-67 shows a compositional bias: low complexity; that stretch reads AASGLAAPSGPSSGLSSGPC. Disordered stretches follow at residues 48-76 and 128-157; these read AASG…GPVS and LEGP…KKKA. Residues 160–336 enclose the DH domain; that stretch reads RSMYVLSELV…CFVPKRCNDM (177 aa). The segment at 278–299 is important for binding to Rho GTPases; that stretch reads LGHRLQLNDLLIKPVQRIMKYQ. The PH domain occupies 348–466; the sequence is KLTAQGKLLG…WIKHVAQILE (119 aa). The interval 467 to 493 is sufficient to bind activated GNAQ; it reads SQRDFLNALQSPIEYQRRESQTNSLGR. Disordered stretches follow at residues 482–524 and 545–580; these read QRRE…GSLP and ALGD…EDEL. Positions 509–520 are enriched in polar residues; that stretch reads DQAQGSTHTPIN. Pro residues predominate over residues 555-566; it reads DSPPVSPTPKTP.

As to quaternary structure, interacts (via the DH domain) with POPDC1 (via the C-terminus cytoplasmic tail). Interacts with activated GNAQ and GNA11. Interacts with RHOA, CDC42 and RAC1. In terms of tissue distribution, isoform 1 and isoform 2 are highly expressed in excitable tissues, such as brain, heart and muscle. Also detected in kidney and liver.

It is found in the cell membrane. Its subcellular location is the cytoplasm. The protein resides in the myofibril. It localises to the sarcomere. Functionally, may play a role in actin cytoskeleton reorganization in different tissues since its activation induces formation of actin stress fibers. It works as a guanine nucleotide exchange factor for Rho family of small GTPases. Links specifically G alpha q/11-coupled receptors to RHOA activation. May be an important regulator of processes involved in axon and dendrite formation. In neurons seems to be an exchange factor primarily for RAC1. Involved in skeletal myogenesis. The chain is Rho guanine nucleotide exchange factor 25 (ARHGEF25) from Homo sapiens (Human).